The chain runs to 530 residues: PC4 and SFRS1-interacting protein (530 aa).

The region spanning 1-64 (MTRDFKPGDL…PKDIFPYSEN (64 aa)) is the PWWP domain. Lys-75 participates in a covalent cross-link: Glycyl lysine isopeptide (Lys-Gly) (interchain with G-Cter in SUMO2). The disordered stretch occupies residues 86–349 (NNPKVKFSSQ…VEKKRETSMD (264 aa)). Polar residues predominate over residues 92-104 (FSSQQASTKQSNA). Phosphoserine occurs at positions 102, 105, and 106. The segment covering 113-135 (KETSVSKEDTDHEEKASNEDVTK) has biased composition (basic and acidic residues). Residues Thr-115 and Thr-122 each carry the phosphothreonine modification. Ser-129 is modified (phosphoserine). A Phosphothreonine modification is found at Thr-141. Residues 144–153 (AARRGRKRKA) are compositionally biased toward basic residues. The Nuclear localization signal signature appears at 146-156 (RRGRKRKAEKQ). Thr-167 is subject to Phosphothreonine. Phosphoserine is present on residues Ser-177 and Ser-206. Over residues 213–261 (EEDKSKKKGQEEKQPKKQLKKDEEGQKEEDKPRKEPDKKEGKKEVESKR) the composition is skewed to basic and acidic residues. Position 271 is a phosphoserine (Ser-271). The residue at position 272 (Thr-272) is a Phosphothreonine. 2 positions are modified to phosphoserine: Ser-273 and Ser-275. Residues 274–283 (DSEEEGDDQE) are compositionally biased toward acidic residues. Residues 287–302 (KRKGGRNFQTAHRRNM) show a composition bias toward basic residues. The span at 305 to 349 (GQHEKEAADRKRKQEEQMETEQQNKDEGKKPEVKKVEKKRETSMD) shows a compositional bias: basic and acidic residues. Coiled coils occupy residues 306-334 (QHEK…EGKK) and 371-395 (NRCI…KHTE). The tract at residues 340-417 (VEKKRETSMD…VSQIIMEKST (78 aa)) is integrase-binding domain (IBD). A Phosphoserine modification is found at Ser-434. Thr-437 carries the post-translational modification Phosphothreonine. The residue at position 443 (Ser-443) is a Phosphoserine. Over residues 446–473 (EQRQHEEANKTKDQGKKGPNKKLDKEQT) the composition is skewed to basic and acidic residues. Positions 446 to 530 (EQRQHEEANK…ISLKDSTLDN (85 aa)) are disordered. Polar residues predominate over residues 474 to 494 (GSKTLNGGSDAPDSNQAQHNG). Residues 498–530 (EESKDKHEASSKKKPSNEERETEISLKDSTLDN) show a composition bias toward basic and acidic residues. Residue Arg-517 is modified to Citrulline. Ser-522 carries the post-translational modification Phosphoserine. Residue Thr-527 is modified to Phosphothreonine.

This sequence belongs to the HDGF family. Monomer. Interacts with IFRD1/PC4. Interacts (via IBD domain) with POGZ (via IBM motif) and CDCA7L (via IBM motifs). Interacts (via IBD domain) with KMT2A (via IBM motifs) with a moderate affinity whereas interacts with the KMT2A-MEN1 complex with a greater affinity; MEN1 enhances interaction of KMT2A with PSIP1. Interacts (via IBD domain) with IWS1 (via IBM motif), MED1 (via IBM motif) and DBF4 (via IBM motifs). As to quaternary structure, (Microbial infection) Interacts (via IBD domain) with feline immunodeficiency virus (FIV) integrase (IN), determining its nuclear localization, its tight association with chromatin and its protection from the proteasome. In terms of processing, citrullinated by PADI4.

The protein resides in the nucleus. Functionally, transcriptional coactivator involved in neuroepithelial stem cell differentiation and neurogenesis. Involved in particular in lens epithelial cell gene regulation and stress responses. May play an important role in lens epithelial to fiber cell terminal differentiation. May play a protective role during stress-induced apoptosis. The chain is PC4 and SFRS1-interacting protein (PSIP1) from Felis catus (Cat).